The following is a 750-amino-acid chain: Photosystem I P700 chlorophyll a apoprotein A1 (750 aa).

8 consecutive transmembrane segments (helical) span residues 70–93, 156–179, 195–219, 291–309, 346–369, 385–411, 433–455, and 531–549; these read VFSA…FHGA, LYCT…FHYH, LNHH…HVSL, TAHH…GHMY, WHAQ…HHMY, LSLF…IFMV, AIVS…LYIH, and FLVH…LILL. Positions 573 and 582 each coordinate [4Fe-4S] cluster. Transmembrane regions (helical) follow at residues 589–610 and 664–686; these read HVFL…HFSW and LSAY…MFLF. Residue His-675 participates in chlorophyll a' binding. The chlorophyll a site is built by Met-683 and Tyr-691. Trp-692 contributes to the phylloquinone binding site. A helical membrane pass occupies residues 724 to 744; sequence AVGVAHYLLGGIVTTWAFFLA.

The protein belongs to the PsaA/PsaB family. In terms of assembly, the PsaA/B heterodimer binds the P700 chlorophyll special pair and subsequent electron acceptors. PSI consists of a core antenna complex that captures photons, and an electron transfer chain that converts photonic excitation into a charge separation. The eukaryotic PSI reaction center is composed of at least 11 subunits. P700 is a chlorophyll a/chlorophyll a' dimer, A0 is one or more chlorophyll a, A1 is one or both phylloquinones and FX is a shared 4Fe-4S iron-sulfur center. serves as cofactor.

It localises to the plastid. The protein resides in the chloroplast thylakoid membrane. The catalysed reaction is reduced [plastocyanin] + hnu + oxidized [2Fe-2S]-[ferredoxin] = oxidized [plastocyanin] + reduced [2Fe-2S]-[ferredoxin]. Functionally, psaA and PsaB bind P700, the primary electron donor of photosystem I (PSI), as well as the electron acceptors A0, A1 and FX. PSI is a plastocyanin-ferredoxin oxidoreductase, converting photonic excitation into a charge separation, which transfers an electron from the donor P700 chlorophyll pair to the spectroscopically characterized acceptors A0, A1, FX, FA and FB in turn. Oxidized P700 is reduced on the lumenal side of the thylakoid membrane by plastocyanin. This Pinus koraiensis (Korean pine) protein is Photosystem I P700 chlorophyll a apoprotein A1.